The chain runs to 553 residues: Transcription factor GAMYB (553 aa).

Residues Met1–Gln17 are compositionally biased toward basic and acidic residues. The disordered stretch occupies residues Met1–Trp45. The segment covering Ser27–Pro38 has biased composition (gly residues). 2 HTH myb-type domains span residues Gly37 to Leu89 and Arg90 to Gln144. 2 DNA-binding regions (H-T-H motif) span residues Trp65–Leu89 and Trp117–Ile140. The tract at residues Pro464–His489 is disordered.

As to quaternary structure, interacts with MYBS1. As to expression, expressed in aleurone cells, inflorescence shoot apical region, stamen primordia, and tapetum cells of the anther. Expressed at low level in roots and vegetative shoots.

It localises to the nucleus. In terms of biological role, transcriptional activator of gibberellin-dependent alpha-amylase expression in aleurone cells. Involved in pollen and floral organs development. May bind to the 5'-TAACAAA-3' box of alpha-amylase promoter. Required for anther development. Functions in parallel with UDT1 to regulate early anther development. Functions upstream of the transcription factor TDR and may positively regulate its transcription. Required for pollen development. Probably required for controlling tapetal cell size and promoting tapetal programmed cell death (PCD) during anther development. Required for exine and Ubisch body formation in anthers. Interacts with the DNA specific motifs of giberrellin-up-regulated genes of anthers and regulates their expression. Positively regulates the expression of the laurate hydroxylase CYP703A3, known to be essential for the development of pollen exine and anther epicuticular layer. Functions with MYBS1 to integrate diverse nutrient starvation and gibberellin (GA) signaling pathways during germination of grains. Sugar, nitrogen and phosphate starvation signals converge and interconnect with GA to promote the co-nuclear import of GAMYB and MYBS1, resulting in the expression of a large set of GA-inducible hydrolases, transporters and regulators that are essential for mobilization of nutrient reserves in the endosperm to support seedling growth. In Oryza sativa subsp. japonica (Rice), this protein is Transcription factor GAMYB.